Consider the following 93-residue polypeptide: Small ribosomal subunit protein uS19 (93 aa).

It belongs to the universal ribosomal protein uS19 family.

Protein S19 forms a complex with S13 that binds strongly to the 16S ribosomal RNA. The chain is Small ribosomal subunit protein uS19 from Leifsonia xyli subsp. xyli (strain CTCB07).